A 403-amino-acid polypeptide reads, in one-letter code: MNKKVNVNKVVVAYSGGLDTSVIIPWLKENYDCEVIAFVADVGQGAEELEGIEAKAIASGASECYVADLKEEMVSEYIFPTLKTGALYEGKYLLGTSMARPIIAKAQVEVARNVGADALCHGCTGKGNDQIRFEGAFAALAPDLHVIAPWREWDLVSREECLDYLAERNIPCTASLTKIYSRDANAWHISTEGGVLEDTWNEPNEDCWAWTVDPEQAPNESETVSIKVEKGAVVAVDGKAMTPYEVVVYLNEKGIKHGVGRIDIVENRLVGMKSRGCYETPGGTIINEALRAVEQLVLDKASFEFREELGIKASHLVYDGRWFTPLCKSILAATEELAQDVNGDVVIKLYKGQATVTQKRSDNSLYSEEFATFGADEVYDQSHAEGFIRLYSLSSRIRALNSK.

ATP-binding positions include A13 to S21 and A40. L-citrulline is bound by residues Y92 and S97. An ATP-binding site is contributed by G122. The L-aspartate site is built by T124, N128, and D129. N128 contacts L-citrulline. L-citrulline-binding residues include R132, S181, S190, E266, and Y278.

This sequence belongs to the argininosuccinate synthase family. Type 1 subfamily. In terms of assembly, homotetramer.

The protein localises to the cytoplasm. The catalysed reaction is L-citrulline + L-aspartate + ATP = 2-(N(omega)-L-arginino)succinate + AMP + diphosphate + H(+). It participates in amino-acid biosynthesis; L-arginine biosynthesis; L-arginine from L-ornithine and carbamoyl phosphate: step 2/3. In Aliivibrio salmonicida (strain LFI1238) (Vibrio salmonicida (strain LFI1238)), this protein is Argininosuccinate synthase.